The chain runs to 467 residues: Ammonium transporter Rh type C (467 aa).

Residues 1–9 (MAWNTNLRW) are Cytoplasmic-facing. Residues 10–30 (RLPLLCLVLEVAMVVLFGLFV) form a helical membrane-spanning segment. Topologically, residues 31-61 (RYSPDADSSWSNEKRKGNITSDLENEFYYRY) are extracellular. An N-linked (GlcNAc...) asparagine glycan is attached at Asn-48. Residues 62-82 (PSFQDVHVMVFLGFGFLMTFL) traverse the membrane as a helical segment. The Cytoplasmic segment spans residues 83–86 (QRYG). A helical membrane pass occupies residues 87–107 (YCALGFNFLLAALGVQWALLM). Residues 108–131 (QGWFQYTKDRLILLGIKNLIDADS) are Extracellular-facing. The next 2 membrane-spanning stretches (helical) occupy residues 132–152 (CVASVCVAFGAVLGKVSPVQM) and 153–173 (LLMTFFQVALFSANEFLLLHV). The Extracellular portion of the chain corresponds to 174-179 (LEVKDA). Residues 180-200 (GGSITIHIFGAYFGLTVTWIL) traverse the membrane as a helical segment. Residues 201–219 (YRHNLDHSRERQSSVYHSN) lie on the Cytoplasmic side of the membrane. The helical transmembrane segment at 220-240 (LFAMIGTLFLWIYWPSFNSAM) threads the bilayer. Residues 241 to 251 (SNYGDAQHRAA) are Extracellular-facing. Residues 252–272 (INTYCSLAASVLTSVAMSSVL) form a helical membrane-spanning segment. Topologically, residues 273–282 (HKKGKLDMVH) are cytoplasmic. A helical transmembrane segment spans residues 283-303 (IQNATLAGGVGVGTAAEMMLM). Pro-304 is a topological domain (extracellular). The helical transmembrane segment at 305 to 325 (YGALIVGFICGAVSTLGFVYL) threads the bilayer. The Cytoplasmic portion of the chain corresponds to 326-343 (TPFLESRLRIQDTCGIHN). Residues 344–364 (LHGIPGLIGAIVGAVTAAYAS) traverse the membrane as a helical segment. The Extracellular portion of the chain corresponds to 365–391 (PDGDRGFVYPFGFHNEKDEKVQGRFQA). Residues 392–412 (FGLLLTLAIAMVGGTIMGLIL) form a helical membrane-spanning segment. Residues 413–467 (KLPFWGQAMDEDCFDDSIYWEMHEEKSSSPEDHTHKPSVPTEPVEQPTSSATLAP) lie on the Cytoplasmic side of the membrane. Positions 436–447 (EEKSSSPEDHTH) are enriched in basic and acidic residues. The disordered stretch occupies residues 436–467 (EEKSSSPEDHTHKPSVPTEPVEQPTSSATLAP). The span at 458 to 467 (QPTSSATLAP) shows a compositional bias: polar residues.

It belongs to the ammonium transporter (TC 2.A.49) family. Rh subfamily. As to quaternary structure, homotrimer. N-glycosylated.

It is found in the cell membrane. The protein localises to the apical cell membrane. It carries out the reaction NH4(+)(in) = NH4(+)(out). The enzyme catalyses methylamine(out) = methylamine(in). It catalyses the reaction CO2(out) = CO2(in). In terms of biological role, ammonium transporter involved in the maintenance of acid-base homeostasis. Transports ammonium and its related derivative methylammonium across the plasma membrane of epithelial cells likely contributing to renal transepithelial ammonia transport and ammonia metabolism. Postulated to primarily mediate an electroneutral bidirectional transport of NH3 ammonia species according to a mechanism that implies interaction of an NH4(+) ion with acidic residues of the pore entry followed by dissociation of NH4(+) into NH3 and H(+). As a result NH3 transits through the central pore and is protonated on the extracellular side reforming NH4(+). May act as a CO2 channel providing for renal acid secretion. This is Ammonium transporter Rh type C (RHCG) from Oryctolagus cuniculus (Rabbit).